Consider the following 140-residue polypeptide: ATP synthase epsilon chain, chloroplastic (140 aa).

Belongs to the ATPase epsilon chain family. In terms of assembly, F-type ATPases have 2 components, CF(1) - the catalytic core - and CF(0) - the membrane proton channel. CF(1) has five subunits: alpha(3), beta(3), gamma(1), delta(1), epsilon(1). CF(0) has three main subunits: a, b and c.

The protein resides in the plastid. Its subcellular location is the chloroplast thylakoid membrane. In terms of biological role, produces ATP from ADP in the presence of a proton gradient across the membrane. This chain is ATP synthase epsilon chain, chloroplastic, found in Panax ginseng (Korean ginseng).